The primary structure comprises 132 residues: Large ribosomal subunit protein uL14 (132 aa).

Belongs to the universal ribosomal protein uL14 family. In terms of assembly, part of the 50S ribosomal subunit. Forms a cluster with proteins L3 and L24e, part of which may contact the 16S rRNA in 2 intersubunit bridges.

Functionally, binds to 23S rRNA. Forms part of two intersubunit bridges in the 70S ribosome. The protein is Large ribosomal subunit protein uL14 of Methanococcus vannielii.